The chain runs to 338 residues: Aspartate carbamoyltransferase catalytic subunit (338 aa).

Carbamoyl phosphate-binding residues include Arg59 and Thr60. Lys87 contributes to the L-aspartate binding site. Carbamoyl phosphate contacts are provided by Arg109, His142, and Gln145. Arg182 and Arg248 together coordinate L-aspartate. Residues Gly289 and Pro290 each contribute to the carbamoyl phosphate site.

This sequence belongs to the aspartate/ornithine carbamoyltransferase superfamily. ATCase family. In terms of assembly, heterododecamer (2C3:3R2) of six catalytic PyrB chains organized as two trimers (C3), and six regulatory PyrI chains organized as three dimers (R2).

The enzyme catalyses carbamoyl phosphate + L-aspartate = N-carbamoyl-L-aspartate + phosphate + H(+). It functions in the pathway pyrimidine metabolism; UMP biosynthesis via de novo pathway; (S)-dihydroorotate from bicarbonate: step 2/3. Catalyzes the condensation of carbamoyl phosphate and aspartate to form carbamoyl aspartate and inorganic phosphate, the committed step in the de novo pyrimidine nucleotide biosynthesis pathway. The chain is Aspartate carbamoyltransferase catalytic subunit from Synechococcus elongatus (strain ATCC 33912 / PCC 7942 / FACHB-805) (Anacystis nidulans R2).